The chain runs to 37 residues: Antifungal protein S (37 aa).

It belongs to the thaumatin family.

Has antifungal activity. Inhibits the growth of Trichoderma viridae and Candida albicans. This chain is Antifungal protein S, found in Hordeum vulgare (Barley).